Here is a 124-residue protein sequence, read N- to C-terminus: MDVSRVNVKRAPCALCTTKNKRCPKKCDFAPYFPAERKGEYENAHKLFGTSNIIKMMRFASKDKQRDMLASSILMEGDAWKKDPARGGFGMIQKLKWQIELRKIYLNELKEKIKVEKEKTELRL.

One can recognise an LOB domain in the interval 11 to 113 (APCALCTTKN…IYLNELKEKI (103 aa)).

Belongs to the LOB domain-containing protein family.

The protein is LOB domain-containing protein 9 (LBD9) of Arabidopsis thaliana (Mouse-ear cress).